Reading from the N-terminus, the 296-residue chain is Glycine--tRNA ligase alpha subunit (296 aa).

Belongs to the class-II aminoacyl-tRNA synthetase family. Tetramer of two alpha and two beta subunits.

The protein localises to the cytoplasm. It catalyses the reaction tRNA(Gly) + glycine + ATP = glycyl-tRNA(Gly) + AMP + diphosphate. The protein is Glycine--tRNA ligase alpha subunit of Francisella philomiragia subsp. philomiragia (strain ATCC 25017 / CCUG 19701 / FSC 153 / O#319-036).